Here is a 599-residue protein sequence, read N- to C-terminus: Beta-(1--&gt;2)glucan export ATP-binding/permease protein NdvA (599 aa).

Residues 21–301 (TITMCVASVL…ISAFINQTVT (281 aa)) enclose the ABC transmembrane type-1 domain. The next 5 helical transmembrane spans lie at 22-42 (ITMC…PVLF), 55-75 (IFSP…AAVF), 156-176 (MRMS…GQLV), 248-268 (MAST…VTKG), and 276-296 (IAFI…SAFI). In terms of domain architecture, ABC transporter spans 335 to 569 (IVFDNVTFEF…GGRFSDLLRA (235 aa)). 368–375 (GPTGAGKT) is a binding site for ATP.

This sequence belongs to the ABC transporter superfamily. Beta-(1--&gt;2)glucan exporter (TC 3.A.1.108.1) family. As to quaternary structure, homodimer.

The protein resides in the cell inner membrane. It carries out the reaction [(1-&gt;2)-beta-D-glucosyl](n)(in) + ATP + H2O = [(1-&gt;2)-beta-D-glucosyl](n)(out) + ADP + phosphate + H(+). Functionally, involved in beta-(1--&gt;2)glucan export. Transmembrane domains (TMD) form a pore in the inner membrane and the ATP-binding domain (NBD) is responsible for energy generation. The sequence is that of Beta-(1--&gt;2)glucan export ATP-binding/permease protein NdvA from Brucella suis biovar 1 (strain 1330).